Reading from the N-terminus, the 92-residue chain is Small ribosomal subunit protein uS19 (92 aa).

Residues 72–92 are disordered; that stretch reads GEFSPTRTYTGHGSDKKSKRG.

This sequence belongs to the universal ribosomal protein uS19 family.

In terms of biological role, protein S19 forms a complex with S13 that binds strongly to the 16S ribosomal RNA. The polypeptide is Small ribosomal subunit protein uS19 (Gluconobacter oxydans (strain 621H) (Gluconobacter suboxydans)).